Consider the following 116-residue polypeptide: Hydrogenase maturation factor HypA (116 aa).

Ni(2+) is bound at residue His2. Cys73, Cys76, Cys89, and Cys92 together coordinate Zn(2+).

It belongs to the HypA/HybF family.

Functionally, involved in the maturation of [NiFe] hydrogenases. Required for nickel insertion into the metal center of the hydrogenase. The polypeptide is Hydrogenase maturation factor HypA (Chlorobium limicola (strain DSM 245 / NBRC 103803 / 6330)).